A 299-amino-acid polypeptide reads, in one-letter code: Tyrosine recombinase XerC (299 aa).

Positions Met-1–Asn-85 constitute a Core-binding (CB) domain. Residues Arg-106 to Asp-285 form the Tyr recombinase domain. Residues Arg-146, Lys-170, His-237, Arg-240, and His-263 contribute to the active site. Tyr-272 (O-(3'-phospho-DNA)-tyrosine intermediate) is an active-site residue.

It belongs to the 'phage' integrase family. XerC subfamily. As to quaternary structure, forms a cyclic heterotetrameric complex composed of two molecules of XerC and two molecules of XerD.

It localises to the cytoplasm. Functionally, site-specific tyrosine recombinase, which acts by catalyzing the cutting and rejoining of the recombining DNA molecules. The XerC-XerD complex is essential to convert dimers of the bacterial chromosome into monomers to permit their segregation at cell division. It also contributes to the segregational stability of plasmids. This is Tyrosine recombinase XerC from Pseudomonas putida (strain ATCC 47054 / DSM 6125 / CFBP 8728 / NCIMB 11950 / KT2440).